A 492-amino-acid chain; its full sequence is Putative methyl-accepting chemotaxis AlkN (492 aa).

2 helical membrane-spanning segments follow: residues 9–29 (FFLI…GMRL) and 159–179 (YVYF…FLLM). An HAMP domain is found at 180–231 (KKTRSSIDEIVHVMNDMSRGDLTYRTIPSNDEVGKMQSSIIAMGAGVSALIE). Positions 236 to 472 (IQGDLFNSAG…DMLDNANIIR (237 aa)) constitute a Methyl-accepting transducer domain.

This sequence belongs to the methyl-accepting chemotaxis (MCP) protein family.

The protein resides in the membrane. The protein operates within hydrocarbon metabolism; alkane degradation. In terms of biological role, chemotactic-signal transducers respond to changes in the concentration of attractants and repellents in the environment, transduce a signal from the outside to the inside of the cell, and facilitate sensory adaptation through the variation of the level of methylation. The sequence is that of Putative methyl-accepting chemotaxis AlkN (alkN) from Ectopseudomonas oleovorans (Pseudomonas oleovorans).